We begin with the raw amino-acid sequence, 88 residues long: Kunitz-type U15-theraphotoxin-Hs1e (88 aa).

The first 27 residues, 1–27, serve as a signal peptide directing secretion; that stretch reads MGTARFLSAVLLLSVLLMVTFPALLSA. Positions 28–33 are excised as a propeptide; the sequence is EYHDGR. In terms of domain architecture, BPTI/Kunitz inhibitor spans 37-85; sequence CSLPSDSGDRLRFFEMWYFDGTTCTKFVYGGYGGNDNRFPTEKACMKRC. 2 disulfide bridges follow: Cys-37/Cys-85 and Cys-60/Cys-81.

This sequence belongs to the venom Kunitz-type family. 03 (sub-Kunitz) subfamily. As to expression, expressed by the venom gland.

Its subcellular location is the secreted. Serine protease inhibitor that inhibits trypsin (Ki=9.61 nM), kallikrein (Ki=24.8 nM), and chymotrypsin. This chain is Kunitz-type U15-theraphotoxin-Hs1e, found in Cyriopagopus schmidti (Chinese bird spider).